Here is a 687-residue protein sequence, read N- to C-terminus: Fatty acid oxidation complex subunit alpha (687 aa).

The enoyl-CoA hydratase stretch occupies residues 1–191 (MKNTSAFAWT…KLGVVDASVP (191 aa)). Residues 307-687 (KSIDYVGVLG…ADKYGDRFIE (381 aa)) are 3-hydroxyacyl-CoA dehydrogenase.

It in the N-terminal section; belongs to the enoyl-CoA hydratase/isomerase family. In the central section; belongs to the 3-hydroxyacyl-CoA dehydrogenase family. In terms of assembly, heterotetramer of two alpha chains (FadJ) and two beta chains (FadI).

It is found in the cytoplasm. The catalysed reaction is a (3S)-3-hydroxyacyl-CoA = a (2E)-enoyl-CoA + H2O. It catalyses the reaction a 4-saturated-(3S)-3-hydroxyacyl-CoA = a (3E)-enoyl-CoA + H2O. The enzyme catalyses a (3S)-3-hydroxyacyl-CoA + NAD(+) = a 3-oxoacyl-CoA + NADH + H(+). It carries out the reaction (3S)-3-hydroxybutanoyl-CoA = (3R)-3-hydroxybutanoyl-CoA. Its pathway is lipid metabolism; fatty acid beta-oxidation. Functionally, catalyzes the formation of a hydroxyacyl-CoA by addition of water on enoyl-CoA. Also exhibits 3-hydroxyacyl-CoA epimerase and 3-hydroxyacyl-CoA dehydrogenase activities. The chain is Fatty acid oxidation complex subunit alpha from Aliivibrio fischeri (strain ATCC 700601 / ES114) (Vibrio fischeri).